The primary structure comprises 329 residues: Cytosolic arginine sensor for mTORC1 subunit 2 (329 aa).

2 consecutive ACT domains span residues 72–140 and 262–322; these read ADAT…HTLS and ELWK…HALK.

Belongs to the GATS family. As to quaternary structure, forms homodimers and heterodimers with CASTOR1. Interacts with the GATOR2 complex which is composed of MIOS, SEC13, SEH1L, WDR24 and WDR59; the interaction is not regulated by arginine.

It localises to the cytoplasm. Its subcellular location is the cytosol. Its function is as follows. Functions as a negative regulator of the TORC1 signaling pathway through the GATOR complex. As part of homodimers or heterodimers with CASTOR1, directly binds and inhibits the GATOR subcomplex GATOR2 and thereby mTORC1. Does not directly bind arginine, but binding of arginine to CASTOR1 disrupts the interaction of CASTOR2-containing heterodimers with GATOR2 which can in turn activate mTORC1 and the TORC1 signaling pathway. The chain is Cytosolic arginine sensor for mTORC1 subunit 2 from Mus musculus (Mouse).